Reading from the N-terminus, the 66-residue chain is U1-theraphotoxin-Cg1d 2 (66 aa).

An N-terminal signal peptide occupies residues Met-1–Ala-21. A propeptide spanning residues Ala-22 to Arg-29 is cleaved from the precursor. 3 disulfide bridges follow: Cys-31/Cys-46, Cys-38/Cys-51, and Cys-45/Cys-58. Residue Pro-63 is modified to Proline amide.

The protein belongs to the neurotoxin 10 (Hwtx-1) family. 46 (Jztx-7/10/12) subfamily. As to expression, expressed by the venom gland.

Its subcellular location is the secreted. Probable ion channel inhibitor. The chain is U1-theraphotoxin-Cg1d 2 from Chilobrachys guangxiensis (Chinese earth tiger tarantula).